The primary structure comprises 92 residues: Small ribosomal subunit protein bS20 (92 aa).

The segment covering 1–21 (MPLHKSAEKRLRQAARRNERN) has biased composition (basic and acidic residues). Disordered regions lie at residues 1–26 (MPLH…ARKK) and 73–92 (ASRK…PTAS). The span at 82 to 92 (KALNNYTPTAS) shows a compositional bias: polar residues.

The protein belongs to the bacterial ribosomal protein bS20 family.

Binds directly to 16S ribosomal RNA. The chain is Small ribosomal subunit protein bS20 from Chlorobaculum tepidum (strain ATCC 49652 / DSM 12025 / NBRC 103806 / TLS) (Chlorobium tepidum).